Here is a 120-residue protein sequence, read N- to C-terminus: Large ribosomal subunit protein uL22 (120 aa).

The interval 1–25 is disordered; it reads MFVNKKYTAKGKNLPSSPKKVRPIA.

It belongs to the universal ribosomal protein uL22 family. Part of the 50S ribosomal subunit.

Its function is as follows. This protein binds specifically to 23S rRNA; its binding is stimulated by other ribosomal proteins, e.g. L4, L17, and L20. It is important during the early stages of 50S assembly. It makes multiple contacts with different domains of the 23S rRNA in the assembled 50S subunit and ribosome. In terms of biological role, the globular domain of the protein is located near the polypeptide exit tunnel on the outside of the subunit, while an extended beta-hairpin is found that lines the wall of the exit tunnel in the center of the 70S ribosome. The protein is Large ribosomal subunit protein uL22 of Borrelia recurrentis (strain A1).